Reading from the N-terminus, the 251-residue chain is Plant UBX domain-containing protein 1 (251 aa).

Methionine 1 carries the N-acetylmethionine modification. One can recognise a UBX domain in the interval 104-180; it reads SKLTKAVIRV…GFVPGAIVYF (77 aa). Positions 212–251 are disordered; sequence AVEPVESSSEPATVDSSAVPVEHERKSTEKKTTKPKWFKM. Positions 217 to 227 are enriched in polar residues; that stretch reads ESSSEPATVDS. Positions 232–243 are enriched in basic and acidic residues; it reads VEHERKSTEKKT.

As to quaternary structure, interacts with CDC48A (non-hexameric) via its UBX-containing C-terminal domain.

The protein resides in the cytoplasm. Its function is as follows. Regulates CDC48A by inhibiting its ATPase activity and by promoting the disassembly of the active hexamer. The polypeptide is Plant UBX domain-containing protein 1 (Arabidopsis thaliana (Mouse-ear cress)).